The sequence spans 126 residues: VLPEEIFFTISIVGVLENLIVLLAVFKNKNLQAPMYFFICSLAISDMLGSLYKILENILIILRNMGYLKPRGSFETTADDIIDSLFVLSLLGAIFSLSVIAADRYITIFHALRYHSIVTMRRTVVV.

The helical transmembrane segment at 1-25 (VLPEEIFFTISIVGVLENLIVLLAV) threads the bilayer. The Cytoplasmic segment spans residues 26–34 (FKNKNLQAP). The helical transmembrane segment at 35–55 (MYFFICSLAISDMLGSLYKIL) threads the bilayer. The Extracellular portion of the chain corresponds to 56 to 80 (ENILIILRNMGYLKPRGSFETTADD). A helical transmembrane segment spans residues 81-102 (IIDSLFVLSLLGAIFSLSVIAA). Topologically, residues 103–123 (DRYITIFHALRYHSIVTMRRT) are cytoplasmic. Residues 124–126 (VVV) form a helical membrane-spanning segment.

This sequence belongs to the G-protein coupled receptor 1 family. Interacts with MRAP; increasing ligand-sensitivity and generation of cAMP. Interacts with MRAP2; competing with MRAP for binding to MC2R and impairing the binding of corticotropin (ACTH).

The protein localises to the cell membrane. In terms of biological role, receptor for corticotropin (ACTH). This receptor is mediated by G proteins (G(s)) which activate adenylate cyclase (cAMP). The chain is Adrenocorticotropic hormone receptor (MC2R) from Papio hamadryas (Hamadryas baboon).